Reading from the N-terminus, the 606-residue chain is Probable glutamine--fructose-6-phosphate aminotransferase [isomerizing] (606 aa).

C2 functions as the For GATase activity in the catalytic mechanism. The Glutamine amidotransferase type-2 domain maps to 2-224; that stretch reads CGISACLNHT…DNDYGYITNN (223 aa). 2 consecutive SIS domains span residues 282-427 and 458-596; these read FFPE…SLDN and LLEF…PDYP.

It catalyses the reaction D-fructose 6-phosphate + L-glutamine = D-glucosamine 6-phosphate + L-glutamate. It participates in nucleotide-sugar biosynthesis; UDP-N-acetyl-alpha-D-glucosamine biosynthesis; alpha-D-glucosamine 6-phosphate from D-fructose 6-phosphate: step 1/1. Its function is as follows. Controls the flux of glucose into the hexosamine pathway. Most likely involved in regulating the availability of precursors for glycosylation of proteins (Potential). The protein is Probable glutamine--fructose-6-phosphate aminotransferase [isomerizing] of Acanthamoeba polyphaga (Amoeba).